Reading from the N-terminus, the 382-residue chain is Anhydro-N-acetylmuramic acid kinase (382 aa).

Residue 9–16 (GTSLDGID) coordinates ATP.

It belongs to the anhydro-N-acetylmuramic acid kinase family.

It carries out the reaction 1,6-anhydro-N-acetyl-beta-muramate + ATP + H2O = N-acetyl-D-muramate 6-phosphate + ADP + H(+). The protein operates within amino-sugar metabolism; 1,6-anhydro-N-acetylmuramate degradation. It functions in the pathway cell wall biogenesis; peptidoglycan recycling. In terms of biological role, catalyzes the specific phosphorylation of 1,6-anhydro-N-acetylmuramic acid (anhMurNAc) with the simultaneous cleavage of the 1,6-anhydro ring, generating MurNAc-6-P. Is required for the utilization of anhMurNAc either imported from the medium or derived from its own cell wall murein, and thus plays a role in cell wall recycling. The polypeptide is Anhydro-N-acetylmuramic acid kinase (Bacillus cereus (strain G9842)).